A 530-amino-acid chain; its full sequence is Bifunctional purine biosynthesis protein PurH (530 aa).

The region spanning 1 to 148 is the MGS-like domain; sequence MNNARPIRRA…KNHKDVTIVV (148 aa).

The protein belongs to the PurH family.

The enzyme catalyses (6R)-10-formyltetrahydrofolate + 5-amino-1-(5-phospho-beta-D-ribosyl)imidazole-4-carboxamide = 5-formamido-1-(5-phospho-D-ribosyl)imidazole-4-carboxamide + (6S)-5,6,7,8-tetrahydrofolate. It carries out the reaction IMP + H2O = 5-formamido-1-(5-phospho-D-ribosyl)imidazole-4-carboxamide. It participates in purine metabolism; IMP biosynthesis via de novo pathway; 5-formamido-1-(5-phospho-D-ribosyl)imidazole-4-carboxamide from 5-amino-1-(5-phospho-D-ribosyl)imidazole-4-carboxamide (10-formyl THF route): step 1/1. The protein operates within purine metabolism; IMP biosynthesis via de novo pathway; IMP from 5-formamido-1-(5-phospho-D-ribosyl)imidazole-4-carboxamide: step 1/1. The sequence is that of Bifunctional purine biosynthesis protein PurH from Vibrio atlanticus (strain LGP32) (Vibrio splendidus (strain Mel32)).